Reading from the N-terminus, the 365-residue chain is Alanine racemase (365 aa).

The active-site Proton acceptor; specific for D-alanine is the lysine 32. Position 32 is an N6-(pyridoxal phosphate)lysine (lysine 32). A substrate-binding site is contributed by arginine 128. Tyrosine 257 acts as the Proton acceptor; specific for L-alanine in catalysis. Methionine 305 serves as a coordination point for substrate.

The protein belongs to the alanine racemase family. Pyridoxal 5'-phosphate serves as cofactor.

The enzyme catalyses L-alanine = D-alanine. Its pathway is amino-acid biosynthesis; D-alanine biosynthesis; D-alanine from L-alanine: step 1/1. Functionally, catalyzes the interconversion of L-alanine and D-alanine. May also act on other amino acids. This is Alanine racemase (alr) from Francisella tularensis subsp. novicida (strain U112).